A 279-amino-acid chain; its full sequence is Putative ABC transporter ATP-binding protein CA_C1368 (279 aa).

Positions 4–239 constitute an ABC transporter domain; sequence ISINNVDYIY…KKVLRNINLR (236 aa). 37 to 44 is an ATP binding site; that stretch reads GPNGAGKS.

This sequence belongs to the ABC transporter superfamily.

The protein localises to the cell membrane. In terms of biological role, probably part of an ABC transporter complex. Responsible for energy coupling to the transport system. This chain is Putative ABC transporter ATP-binding protein CA_C1368, found in Clostridium acetobutylicum (strain ATCC 824 / DSM 792 / JCM 1419 / IAM 19013 / LMG 5710 / NBRC 13948 / NRRL B-527 / VKM B-1787 / 2291 / W).